The primary structure comprises 72 residues: UPF0270 protein YheU (72 aa).

This sequence belongs to the UPF0270 family.

In Salmonella dublin (strain CT_02021853), this protein is UPF0270 protein YheU.